A 223-amino-acid polypeptide reads, in one-letter code: uncharacterized protein (223 aa).

The C4-type zinc finger occupies C33–C67.

The protein belongs to the ZPR1 family.

This is an uncharacterized protein from Pyrococcus horikoshii (strain ATCC 700860 / DSM 12428 / JCM 9974 / NBRC 100139 / OT-3).